Consider the following 258-residue polypeptide: Isoprenyl transferase (258 aa).

Residue Asp-38 is part of the active site. Asp-38 provides a ligand contact to Mg(2+). Substrate contacts are provided by residues 39–42, Trp-43, Arg-51, His-55, and 83–85; these read GNGR and STE. The active-site Proton acceptor is the Asn-86. Substrate is bound by residues Trp-87, Arg-89, Arg-206, and 212–214; that span reads RIS. Residue Glu-225 coordinates Mg(2+).

This sequence belongs to the UPP synthase family. Homodimer. Requires Mg(2+) as cofactor.

Its function is as follows. Catalyzes the condensation of isopentenyl diphosphate (IPP) with allylic pyrophosphates generating different type of terpenoids. This chain is Isoprenyl transferase, found in Bacillus cereus (strain ATCC 14579 / DSM 31 / CCUG 7414 / JCM 2152 / NBRC 15305 / NCIMB 9373 / NCTC 2599 / NRRL B-3711).